We begin with the raw amino-acid sequence, 76 residues long: Omega-scoloptoxin(13)-Ssm2b (76 aa).

The first 22 residues, 1–22 (MAYIYALIFAIVVCMNTDVIQA), serve as a signal peptide directing secretion.

Belongs to the scoloptoxin-13 family. Post-translationally, contains 3 disulfide bonds. As to expression, expressed by the venom gland.

It is found in the secreted. Functionally, inhibits voltage-gated calcium channel (Cav) currents. This is Omega-scoloptoxin(13)-Ssm2b from Scolopendra mutilans (Chinese red-headed centipede).